Reading from the N-terminus, the 673-residue chain is Protein kinase C delta type (673 aa).

Residues 1 to 106 enclose the C2 domain; sequence MAPFLRISFN…KNNGKAEFWL (106 aa). Phosphothreonine is present on residues Thr43 and Thr50. Tyr64 bears the Phosphotyrosine mark. At Ser130 the chain carries Phosphoserine. Residue Thr141 is modified to Phosphothreonine. Position 155 is a phosphotyrosine (Tyr155). Residues 158-208 form a Phorbol-ester/DAG-type 1 zinc finger; sequence NHEFIATFFGQPTFCSVCKEFVWGLNKQGYKCRQCNAAIHKKCIDKIIGRC. Position 218 is a phosphothreonine (Thr218). Residues 230 to 280 form a Phorbol-ester/DAG-type 2 zinc finger; it reads PHRFKVYNYMSPTFCDHCGTLLWGLVKQGLKCEDCGMNVHHKCREKVANLC. Ser299 carries the post-translational modification Phosphoserine; by autocatalysis. Phosphotyrosine; by SRC is present on residues Tyr311 and Tyr332. The Protein kinase domain maps to 347–601; sequence FTFQKVLGKG…TGNIRLHPFF (255 aa). Residue 353-361 participates in ATP binding; it reads LGKGSFGKV. Phosphotyrosine is present on Tyr372. Lys376 is a binding site for ATP. Thr449 carries the phosphothreonine modification. Asp471 functions as the Proton acceptor in the catalytic mechanism. Ser504 is subject to Phosphoserine. The residue at position 505 (Thr505) is a Phosphothreonine; by autocatalysis. The residue at position 565 (Tyr565) is a Phosphotyrosine. Positions 602-673 constitute an AGC-kinase C-terminal domain; that stretch reads KTINWNLLEK…VNPKYEQFLE (72 aa). A phosphoserine mark is found at Ser643, Ser652, and Ser662.

The protein belongs to the protein kinase superfamily. AGC Ser/Thr protein kinase family. PKC subfamily. Interacts with PDPK1 (via N-terminal region). Interacts with RAD9A. Interacts with CDCP1. Interacts with MUC1. Interacts with VASP. Interacts with CAVIN3. Interacts with PRKD2 (via N-terminus and zing-finger domain 1 and 2) in response to oxidative stress; the interaction is independent of PRKD2 tyrosine phosphorylation. Interacts with PLSC3; interaction is enhanced by UV irradiation. Post-translationally, autophosphorylated and/or phosphorylated at Thr-505, within the activation loop; phosphorylation at Thr-505 is not a prerequisite for enzymatic activity. Autophosphorylated at Ser-299. Upon TNFSF10/TRAIL treatment, phosphorylated at Tyr-155; phosphorylation is required for its translocation to the endoplasmic reticulum and cleavage by caspase-3. Phosphorylated at Tyr-311, Tyr-332 and Tyr-565; phosphorylation of Tyr-311 and Tyr-565 following thrombin or zymosan stimulation potentiates its kinase activity. Phosphorylated by protein kinase PDPK1; phosphorylation is inhibited by the apoptotic C-terminal cleavage product of PKN2. Phosphorylated at Tyr-311 and Tyr-332 by SRC; phosphorylation leads to enhanced autophosphorylation at Thr-505. Phosphorylated at Tyr-311 through a SYK and SRC mechanism downstream of C-type lectin receptors activation, promoting its activation. Proteolytically cleaved into a catalytic subunit and a regulatory subunit by caspase-3 during apoptosis which results in kinase activation.

It localises to the cytoplasm. The protein resides in the nucleus. Its subcellular location is the perinuclear region. The protein localises to the cell membrane. It is found in the mitochondrion. It localises to the endomembrane system. The enzyme catalyses L-seryl-[protein] + ATP = O-phospho-L-seryl-[protein] + ADP + H(+). It catalyses the reaction L-threonyl-[protein] + ATP = O-phospho-L-threonyl-[protein] + ADP + H(+). The catalysed reaction is L-tyrosyl-[protein] + ATP = O-phospho-L-tyrosyl-[protein] + ADP + H(+). Novel PKCs (PRKCD, PRKCE, PRKCH and PRKCQ) are calcium-insensitive, but activated by diacylglycerol (DAG) and phosphatidylserine. Three specific sites; Thr-505 (activation loop of the kinase domain), Ser-643 (turn motif) and Ser-662 (hydrophobic region), need to be phosphorylated for its full activation. Activated by caspase-3 (CASP3) cleavage during apoptosis. After cleavage, the pseudosubstrate motif in the regulatory subunit is released from the substrate recognition site of the catalytic subunit, which enables PRKCD to become constitutively activated. The catalytic subunit which displays properties of a sphingosine-dependent protein kinase is activated by D-erythro-sphingosine (Sph) or N,N-dimethyl-D-erythrosphingosine (DMS) or N,N,N-trimethyl-D-erythrosphingosine (TMS), but not by ceramide or Sph-1-P and is strongly inhibited by phosphatidylserine. Its function is as follows. Calcium-independent, phospholipid- and diacylglycerol (DAG)-dependent serine/threonine-protein kinase that plays contrasting roles in cell death and cell survival by functioning as a pro-apoptotic protein during DNA damage-induced apoptosis, but acting as an anti-apoptotic protein during cytokine receptor-initiated cell death, is involved in tumor suppression, is required for oxygen radical production by NADPH oxidase and acts as a positive or negative regulator in platelet functional responses. Upon DNA damage, activates the promoter of the death-promoting transcription factor BCLAF1/Btf to trigger BCLAF1-mediated p53/TP53 gene transcription and apoptosis. In response to oxidative stress, interact with and activate CHUK/IKKA in the nucleus, causing the phosphorylation of p53/TP53. In the case of ER stress or DNA damage-induced apoptosis, can form a complex with the tyrosine-protein kinase ABL1 which trigger apoptosis independently of p53/TP53. In cytosol can trigger apoptosis by activating MAPK11 or MAPK14, inhibiting AKT1 and decreasing the level of X-linked inhibitor of apoptosis protein (XIAP), whereas in nucleus induces apoptosis via the activation of MAPK8 or MAPK9. Upon ionizing radiation treatment, is required for the activation of the apoptosis regulators BAX and BAK, which trigger the mitochondrial cell death pathway. Can phosphorylate MCL1 and target it for degradation which is sufficient to trigger for BAX activation and apoptosis. Is required for the control of cell cycle progression both at G1/S and G2/M phases. Mediates phorbol 12-myristate 13-acetate (PMA)-induced inhibition of cell cycle progression at G1/S phase by up-regulating the CDK inhibitor CDKN1A/p21 and inhibiting the cyclin CCNA2 promoter activity. In response to UV irradiation can phosphorylate CDK1, which is important for the G2/M DNA damage checkpoint activation. Can protect glioma cells from the apoptosis induced by TNFSF10/TRAIL, probably by inducing increased phosphorylation and subsequent activation of AKT1. Can also act as tumor suppressor upon mitogenic stimulation with PMA or TPA. In N-formyl-methionyl-leucyl-phenylalanine (fMLP)-treated cells, is required for NCF1 (p47-phox) phosphorylation and activation of NADPH oxidase activity, and regulates TNF-elicited superoxide anion production in neutrophils, by direct phosphorylation and activation of NCF1 or indirectly through MAPK1/3 (ERK1/2) signaling pathways. Involved in antifungal immunity by mediating phosphorylation and activation of CARD9 downstream of C-type lectin receptors activation, promoting interaction between CARD9 and BCL10, followed by activation of NF-kappa-B and MAP kinase p38 pathways. May also play a role in the regulation of NADPH oxidase activity in eosinophil after stimulation with IL5, leukotriene B4 or PMA. In collagen-induced platelet aggregation, acts a negative regulator of filopodia formation and actin polymerization by interacting with and negatively regulating VASP phosphorylation. Downstream of PAR1, PAR4 and CD36/GP4 receptors, regulates differentially platelet dense granule secretion; acts as a positive regulator in PAR-mediated granule secretion, whereas it negatively regulates CD36/GP4-mediated granule release. Phosphorylates MUC1 in the C-terminal and regulates the interaction between MUC1 and beta-catenin. The catalytic subunit phosphorylates 14-3-3 proteins (YWHAB, YWHAZ and YWHAH) in a sphingosine-dependent fashion. Phosphorylates ELAVL1 in response to angiotensin-2 treatment. Phosphorylates mitochondrial phospholipid scramblase 3 (PLSCR3), resulting in increased cardiolipin expression on the mitochondrial outer membrane which facilitates apoptosis. Phosphorylates SMPD1 which induces SMPD1 secretion. Truncated isoform 2 is inactive. The sequence is that of Protein kinase C delta type from Rattus norvegicus (Rat).